We begin with the raw amino-acid sequence, 196 residues long: MSRYRGPRFKKIRRLGALPGLTSKRPRSGSDLKNPLRSVKKSQYRIRLEEKQKLRFHYGLTERQLLRYVHIAGKAKGSTGQVLLQLLEMRLDNILFRLGMASTIPGARQLVNHRHILVNGRIVDIPSYRCKPRDIITTKDKQRSKALIQTSIASSPHEELPNHLTIDSFQYKGLINQIIDSKWIGLKINELLVVEY.

The S4 RNA-binding domain maps to 89–149 (MRLDNILFRL…DKQRSKALIQ (61 aa)).

The protein belongs to the universal ribosomal protein uS4 family. Part of the 30S ribosomal subunit. Contacts protein S5. The interaction surface between S4 and S5 is involved in control of translational fidelity.

Its subcellular location is the plastid. The protein localises to the chloroplast. One of the primary rRNA binding proteins, it binds directly to 16S rRNA where it nucleates assembly of the body of the 30S subunit. In terms of biological role, with S5 and S12 plays an important role in translational accuracy. This Asparagus maritimus (Sea asparagus) protein is Small ribosomal subunit protein uS4c (rps4).